The following is a 231-amino-acid chain: Deoxyribose-phosphate aldolase (231 aa).

The active-site Proton donor/acceptor is the D86. The active-site Schiff-base intermediate with acetaldehyde is the K147. K172 acts as the Proton donor/acceptor in catalysis. The tract at residues W206 to Y231 is disordered.

The protein belongs to the DeoC/FbaB aldolase family. DeoC type 1 subfamily.

It localises to the cytoplasm. It carries out the reaction 2-deoxy-D-ribose 5-phosphate = D-glyceraldehyde 3-phosphate + acetaldehyde. The protein operates within carbohydrate degradation; 2-deoxy-D-ribose 1-phosphate degradation; D-glyceraldehyde 3-phosphate and acetaldehyde from 2-deoxy-alpha-D-ribose 1-phosphate: step 2/2. In terms of biological role, catalyzes a reversible aldol reaction between acetaldehyde and D-glyceraldehyde 3-phosphate to generate 2-deoxy-D-ribose 5-phosphate. The polypeptide is Deoxyribose-phosphate aldolase (Haloarcula marismortui (strain ATCC 43049 / DSM 3752 / JCM 8966 / VKM B-1809) (Halobacterium marismortui)).